A 434-amino-acid chain; its full sequence is Asparagine--tRNA ligase (434 aa).

The protein belongs to the class-II aminoacyl-tRNA synthetase family.

Its subcellular location is the cytoplasm. It carries out the reaction tRNA(Asn) + L-asparagine + ATP = L-asparaginyl-tRNA(Asn) + AMP + diphosphate + H(+). The sequence is that of Asparagine--tRNA ligase from Pyrococcus horikoshii (strain ATCC 700860 / DSM 12428 / JCM 9974 / NBRC 100139 / OT-3).